We begin with the raw amino-acid sequence, 137 residues long: MGMLSEFKAFAVKGNVVDMAVGIIIGAAFGKIVSSFVGDVIMPPIGLLIGGVDFSDLAITLKAAEGDVPAVVLAYGKFIQTILDFIIVAFAIFMGVKVINRLKREEAVAPTAPPVPSAEETLLTEIRDLLKAQNRQP.

Helical transmembrane passes span 9–29 (AFAV…GAAF) and 79–99 (IQTI…VKVI).

The protein belongs to the MscL family. Homopentamer.

The protein resides in the cell inner membrane. In terms of biological role, channel that opens in response to stretch forces in the membrane lipid bilayer. May participate in the regulation of osmotic pressure changes within the cell. The chain is Large-conductance mechanosensitive channel from Pseudomonas entomophila (strain L48).